The primary structure comprises 605 residues: NADH-ubiquinone oxidoreductase chain 5 (605 aa).

The next 15 membrane-spanning stretches (helical) occupy residues Thr-8–Thr-28, Ile-34–Phe-54, Met-87–Tyr-107, Phe-117–Leu-137, Leu-140–Gly-160, Ala-171–Phe-191, Thr-241–Ile-261, Ile-273–Leu-293, Ile-301–Gln-321, Leu-324–Gly-344, Leu-366–Leu-386, Leu-409–Phe-429, Leu-457–Ile-477, Met-482–Leu-502, and Ile-584–Phe-604.

The protein belongs to the complex I subunit 5 family. Core subunit of respiratory chain NADH dehydrogenase (Complex I) which is composed of 45 different subunits.

Its subcellular location is the mitochondrion inner membrane. It catalyses the reaction a ubiquinone + NADH + 5 H(+)(in) = a ubiquinol + NAD(+) + 4 H(+)(out). Core subunit of the mitochondrial membrane respiratory chain NADH dehydrogenase (Complex I) which catalyzes electron transfer from NADH through the respiratory chain, using ubiquinone as an electron acceptor. Essential for the catalytic activity and assembly of complex I. The polypeptide is NADH-ubiquinone oxidoreductase chain 5 (MT-ND5) (Rousettus amplexicaudatus (Common rousette)).